Here is a 190-residue protein sequence, read N- to C-terminus: Small ribosomal subunit protein mS23 (190 aa).

N-acetylalanine is present on Ala-2. At Lys-83 the chain carries N6-succinyllysine. Lys-102 is modified (N6-acetyllysine). The interval 137 to 190 (KARTQQEGSQVSRKSESMGVESQTALEENPPLKEVPQAQHLESPGEESKGLSPP) is disordered.

Belongs to the mitochondrion-specific ribosomal protein mS23 family. In terms of assembly, component of the mitochondrial ribosome small subunit (28S) which comprises a 12S rRNA and about 30 distinct proteins.

The protein resides in the mitochondrion. The sequence is that of Small ribosomal subunit protein mS23 from Bos taurus (Bovine).